Here is a 332-residue protein sequence, read N- to C-terminus: Glyceraldehyde-3-phosphate dehydrogenase 1 (332 aa).

NAD(+) is bound by residues 11 to 12 (RI), Asp-32, and Arg-77. D-glyceraldehyde 3-phosphate-binding positions include 148–150 (SCT), Thr-179, 208–209 (TG), and Arg-231. The active-site Nucleophile is the Cys-149. Residue Asn-313 coordinates NAD(+).

The protein belongs to the glyceraldehyde-3-phosphate dehydrogenase family. As to quaternary structure, homotetramer.

It is found in the cytoplasm. The catalysed reaction is D-glyceraldehyde 3-phosphate + phosphate + NAD(+) = (2R)-3-phospho-glyceroyl phosphate + NADH + H(+). It functions in the pathway carbohydrate degradation; glycolysis; pyruvate from D-glyceraldehyde 3-phosphate: step 1/5. This chain is Glyceraldehyde-3-phosphate dehydrogenase 1 (Gapdh1), found in Drosophila melanogaster (Fruit fly).